Here is a 396-residue protein sequence, read N- to C-terminus: Growth-regulating factor 1 (396 aa).

One can recognise a QLQ domain in the interval 18-53 (PFTASQWQELEHQALIYKYMASGTPIPSDLILPLRR). 2 consecutive short sequence motifs (bipartite nuclear localization signal) follow at residues 86 to 105 (RKAE…KKWR) and 123 to 130 (RGKNRSRK). Positions 90–134 (DPEPGRCRRTDGKKWRCSKEAYPDSKYCEKHMHRGKNRSRKPVEM) constitute a WRC domain. Residues 117–176 (CEKHMHRGKNRSRKPVEMSLATPPPPSSSATSAASNSSAGVAPTTTTTSSPAPSYSRPAP) form a disordered region. The segment covering 120 to 129 (HMHRGKNRSR) has biased composition (basic residues). Residues 144-174 (SSATSAASNSSAGVAPTTTTTSSPAPSYSRP) are compositionally biased toward low complexity.

This sequence belongs to the GRF family. Highly expressed in the intercalary meristem of the internode and in the shoot apex. Detected in the leaf primordia and emerging leaves in the uppermost node. Preferentially localized in the epidermis and in the tissues surrounding vascular bundles of the intercalary meristem of the internode and in adventitious roots of the second highest node. Low expression in the coleoptile and in the youngest leaf.

The protein localises to the nucleus. In terms of biological role, transcription activator that plays a regulatory role in gibberellin-induced stem elongation. The chain is Growth-regulating factor 1 (GRF1) from Oryza sativa subsp. indica (Rice).